The chain runs to 559 residues: Neutral amino acid transporter 9 (559 aa).

Residues 1-118 are Cytoplasmic-facing; sequence MANVDSDSRH…YTEGYRKNTS (118 aa). A helical membrane pass occupies residues 119–139; the sequence is LVTIFMIWNTMMGTSILSIPW. Positions 128-133 are important for arginine binding and amino acid transport; that stretch reads TMMGTS. Ser-133 contributes to the arginine binding site. At 140 to 145 the chain is on the lumenal side; the sequence is GIKQAG. The helical transmembrane segment at 146–166 threads the bilayer; the sequence is FTTGMCVIVLMGLLTLYCCYR. Residues 167–197 are Cytoplasmic-facing; that stretch reads VVKSRSMIVTSDTTTWEYPDVCKHYFGSFGQ. The chain crosses the membrane as a helical span at residues 198–224; it reads WSSLLFSLVSLIGAMIVYWVLMSNFLF. At 225–281 the chain is on the lumenal side; it reads NTGKFIFNFIHHINDTDTVLSTNNSSPVICPSAGSGHPDNSSMIFYNSDTEVRLFER. Asn-238, Asn-247, and Asn-264 each carry an N-linked (GlcNAc...) asparagine glycan. An intrachain disulfide couples Cys-254 to Cys-422. Residues 282 to 298 form a helical membrane-spanning segment; the sequence is WWDKSKTVPFYLIGLLL. Topologically, residues 299-307 are cytoplasmic; sequence PLLNFKSPS. Residues 308-332 traverse the membrane as a helical segment; sequence FFSKFNILGTVSVLYLIFIVTLKAI. At 333–354 the chain is on the lumenal side; it reads RLGFHLEFHWFAPTEFFVPEIR. The chain crosses the membrane as a helical span at residues 355–375; the sequence is AQFPQLTGVLTLAFFIHNCII. Over 376 to 392 the chain is Cytoplasmic; the sequence is TLLKNNKNQENNVRDLC. The helical transmembrane segment at 393-413 threads the bilayer; the sequence is IAYMLVTLTYLYIGVLVFASF. At 414–435 the chain is on the lumenal side; sequence PSPPLPKDCIEQNFLDNFPSSD. The chain crosses the membrane as a helical span at residues 436 to 456; sequence TLSFIARICLLFQMMTVYPLL. The CARC motif signature appears at 442 to 452; sequence RICLLFQMMTV. Positions 455–461 match the CRAC motif motif; that stretch reads LLGYLAR. At 457-477 the chain is on the cytoplasmic side; it reads GYLARVQLLGHIFGDIYPSIF. A helical membrane pass occupies residues 478–498; that stretch reads HVLILNLIIVGAGVTMACFYP. At 499–505 the chain is on the lumenal side; it reads NIGGIIR. The chain crosses the membrane as a helical span at residues 506–526; that stretch reads YSGAACGLAFVFIYPSLIYIL. Residues 527-538 lie on the Cytoplasmic side of the membrane; it reads SQHQEERLTWPK. The helical transmembrane segment at 539-559 threads the bilayer; the sequence is LVFHIIIIILGLANLIAQFFM.

It belongs to the amino acid/polyamine transporter 2 family. SLC38A9 subfamily. In terms of assembly, associated component of the Ragulator complex (composed of LAMTOR1, LAMTOR2, LAMTOR3, LAMTOR4 and LAMTOR5). Associated component of the Rag GTPases heterodimers (composed of RRAGA, RRAGB, RRAGC and RRAGD); this interaction is independent of the Ragulator complex but depends on the nucleotide loading state of the Rag GTPase heterodimer. Interacts with TM4SF5. Interacts with NPC1; this interaction inhibits cholesterol-mediated mTORC1 activation via its sterol transport activity. In terms of processing, glycosylated.

Its subcellular location is the lysosome membrane. It is found in the late endosome membrane. It carries out the reaction L-leucine(in) = L-leucine(out). The catalysed reaction is L-tyrosine(in) = L-tyrosine(out). The enzyme catalyses L-glutamine(out) = L-glutamine(in). It catalyses the reaction L-asparagine(out) = L-asparagine(in). In terms of biological role, lysosomal amino acid transporter involved in the activation of mTORC1 in response to amino acid levels. Probably acts as an amino acid sensor of the Rag GTPases and Ragulator complexes, 2 complexes involved in amino acid sensing and activation of mTORC1, a signaling complex promoting cell growth in response to growth factors, energy levels, and amino acids. Following activation by amino acids, the Ragulator and Rag GTPases function as a scaffold recruiting mTORC1 to lysosomes where it is in turn activated. SLC38A9 mediates transport of amino acids with low capacity and specificity with a slight preference for polar amino acids. Acts as an arginine sensor. Following activation by arginine binding, mediates transport of L-glutamine, leucine and tyrosine with high efficiency, and is required for the efficient utilization of these amino acids after lysosomal protein degradation. However, the transport mechanism is not well defined and the role of sodium is not clear. Can disassemble the lysosomal folliculin complex (LFC), and thereby triggers GAP activity of FLCN:FNIP2 toward RRAGC. Acts as an cholesterol sensor that conveys increases in lysosomal cholesterol, leading to lysosomal recruitment and activation of mTORC1 via the Rag GTPases. Guanine exchange factor (GEF) that, upon arginine binding, stimulates GDP release from RRAGA and therefore activates the Rag GTPase heterodimer and the mTORC1 pathway in response to nutrient sufficiency. This is Neutral amino acid transporter 9 from Rattus norvegicus (Rat).